The following is a 230-amino-acid chain: Cytidylate kinase (230 aa).

ATP is bound at residue 12–20 (GPSGAGKGT).

The protein belongs to the cytidylate kinase family. Type 1 subfamily.

It is found in the cytoplasm. The enzyme catalyses CMP + ATP = CDP + ADP. It catalyses the reaction dCMP + ATP = dCDP + ADP. The sequence is that of Cytidylate kinase from Aeromonas hydrophila subsp. hydrophila (strain ATCC 7966 / DSM 30187 / BCRC 13018 / CCUG 14551 / JCM 1027 / KCTC 2358 / NCIMB 9240 / NCTC 8049).